The sequence spans 363 residues: Sulfate/thiosulfate import ATP-binding protein CysA (363 aa).

The 235-residue stretch at 3–237 (IEINNISKYF…PATRFVLEFL (235 aa)) folds into the ABC transporter domain. ATP is bound at residue 35-42 (GPSGSGKT).

The protein belongs to the ABC transporter superfamily. Sulfate/tungstate importer (TC 3.A.1.6) family. The complex is composed of two ATP-binding proteins (CysA), two transmembrane proteins (CysT and CysW) and a solute-binding protein (CysP).

The protein localises to the cell inner membrane. It catalyses the reaction sulfate(out) + ATP + H2O = sulfate(in) + ADP + phosphate + H(+). It carries out the reaction thiosulfate(out) + ATP + H2O = thiosulfate(in) + ADP + phosphate + H(+). Its function is as follows. Part of the ABC transporter complex CysAWTP involved in sulfate/thiosulfate import. Responsible for energy coupling to the transport system. This is Sulfate/thiosulfate import ATP-binding protein CysA from Yersinia pseudotuberculosis serotype I (strain IP32953).